The chain runs to 764 residues: 5-methyltetrahydropteroyltriglutamate--homocysteine methyltransferase (764 aa).

Residues 16–19 (RELK) and lysine 121 contribute to the 5-methyltetrahydropteroyltri-L-glutamate site. L-homocysteine is bound by residues 440 to 442 (IGS) and glutamate 493. L-methionine-binding positions include 440–442 (IGS) and glutamate 493. Residues 524–525 (RC) and tryptophan 570 each bind 5-methyltetrahydropteroyltri-L-glutamate. Residue aspartate 608 coordinates L-homocysteine. L-methionine is bound at residue aspartate 608. Residue glutamate 614 coordinates 5-methyltetrahydropteroyltri-L-glutamate. Residues histidine 650, cysteine 652, and glutamate 674 each coordinate Zn(2+). The Proton donor role is filled by histidine 703. Position 735 (cysteine 735) interacts with Zn(2+).

This sequence belongs to the vitamin-B12 independent methionine synthase family. The cofactor is Zn(2+).

It carries out the reaction 5-methyltetrahydropteroyltri-L-glutamate + L-homocysteine = tetrahydropteroyltri-L-glutamate + L-methionine. The protein operates within amino-acid biosynthesis; L-methionine biosynthesis via de novo pathway; L-methionine from L-homocysteine (MetE route): step 1/1. Its function is as follows. Catalyzes the transfer of a methyl group from 5-methyltetrahydrofolate to homocysteine resulting in methionine formation. This chain is 5-methyltetrahydropteroyltriglutamate--homocysteine methyltransferase, found in Burkholderia ambifaria (strain MC40-6).